A 102-amino-acid chain; its full sequence is Protein ORF28 (102 aa).

A helical transmembrane segment spans residues 28 to 48 (VIGLITVLFLLVIGACVYCCI).

It is found in the host membrane. The polypeptide is Protein ORF28 (ORF28) (Homo sapiens (Human)).